Consider the following 156-residue polypeptide: MPRRRVIGQRKILPDPKFKSELLAKFVNIVMVDGKKSTAEKIVYGALELMAEKSGKDHLAVFEEALENIRPSVEVKSRRVGGSTYQVPVEVRPVRRNALAMRWLVEAARKRGEKSMAQRLANEMLDASENKGTSVKKREDVHRMADANKAFAHYRW.

The protein belongs to the universal ribosomal protein uS7 family. As to quaternary structure, part of the 30S ribosomal subunit. Contacts proteins S9 and S11.

Its function is as follows. One of the primary rRNA binding proteins, it binds directly to 16S rRNA where it nucleates assembly of the head domain of the 30S subunit. Is located at the subunit interface close to the decoding center, probably blocks exit of the E-site tRNA. The chain is Small ribosomal subunit protein uS7 from Aliivibrio salmonicida (strain LFI1238) (Vibrio salmonicida (strain LFI1238)).